A 444-amino-acid chain; its full sequence is Multidrug resistance protein MdtA (444 aa).

A signal peptide spans 1-20; the sequence is MKSQSKRTSRLFVFVGVVVA. Residues 37–52 are compositionally biased toward polar residues; the sequence is NNTSGAQQSARGQDTS. 2 disordered regions span residues 37–60 and 398–444; these read NNTS…RNTP and TPRS…AEKS. A compositionally biased stretch (low complexity) spans 406-419; the sequence is ANPASAEKAAAEAE. Over residues 435–444 the composition is skewed to polar residues; it reads ARSTTAAEKS.

It belongs to the membrane fusion protein (MFP) (TC 8.A.1) family. Part of a tripartite efflux system composed of MdtA, MdtB and MdtC.

The protein resides in the cell inner membrane. The sequence is that of Multidrug resistance protein MdtA from Yersinia pestis bv. Antiqua (strain Antiqua).